A 320-amino-acid polypeptide reads, in one-letter code: o-succinylbenzoate synthase (320 aa).

The Proton donor role is filled by Lys-133. Residues Asp-161, Glu-190, and Asp-213 each contribute to the Mg(2+) site. Lys-235 functions as the Proton acceptor in the catalytic mechanism.

This sequence belongs to the mandelate racemase/muconate lactonizing enzyme family. MenC type 1 subfamily. The cofactor is a divalent metal cation.

It catalyses the reaction (1R,6R)-6-hydroxy-2-succinyl-cyclohexa-2,4-diene-1-carboxylate = 2-succinylbenzoate + H2O. The protein operates within quinol/quinone metabolism; 1,4-dihydroxy-2-naphthoate biosynthesis; 1,4-dihydroxy-2-naphthoate from chorismate: step 4/7. It functions in the pathway quinol/quinone metabolism; menaquinone biosynthesis. In terms of biological role, converts 2-succinyl-6-hydroxy-2,4-cyclohexadiene-1-carboxylate (SHCHC) to 2-succinylbenzoate (OSB). The chain is o-succinylbenzoate synthase from Escherichia coli O139:H28 (strain E24377A / ETEC).